A 551-amino-acid polypeptide reads, in one-letter code: (6-4)DNA photolyase (551 aa).

Residues 13–157 (AAAMVWFRKG…DVFSPVSHTL (145 aa)) enclose the Photolyase/cryptochrome alpha/beta domain. E254 lines the phosphate pocket. Residues K255, 268 to 272 (TTVLS), 309 to 313 (QLLWR), 372 to 375 (WMHH), R378, 407 to 409 (DSD), and N413 contribute to the FAD site. DNA is bound at residue W312. The segment at 374-379 (HHLARH) is interaction with DNA. W419 contacts DNA. Positions 508 to 551 (YASNRLDDDKPDKGKSSNSSRRKLSAGSQVTPNSSKTKQLKRSS) are disordered. Residues 512 to 522 (RLDDDKPDKGK) are compositionally biased toward basic and acidic residues. Over residues 533–544 (AGSQVTPNSSKT) the composition is skewed to polar residues.

Belongs to the DNA photolyase class-1 family. Requires FAD as cofactor.

The enzyme catalyses (6-4) photoproduct (in DNA) = 2 pyrimidine residues (in DNA).. In terms of biological role, involved in repair of UV radiation-induced DNA damage. Catalyzes the photoreactivation of pyrimidine [6-4] pyrimidone photoproduct (6-4 products). The chain is (6-4)DNA photolyase (UVR3) from Oryza sativa subsp. japonica (Rice).